A 445-amino-acid polypeptide reads, in one-letter code: D-serine transporter DsdX (445 aa).

12 consecutive transmembrane segments (helical) span residues 5-25 (IWVVSTLLISIVLIVLTIVKF), 29-49 (PFLALLLASFFVGTMMGMGPL), 57-77 (SGIGGTLGFLAAVIGLGTILG), 106-126 (VLVGLICGITLFVEVGVVLLI), 140-160 (LLKLAIPLCTALMAVHCVVPP), 178-198 (VIVYGLLVGLMASLIGGPLFL), 224-244 (TLPSLGATLFTVLLPIALMLV), 265-285 (IGNPITATFIAVFVAYYVLGI), 302-322 (FGSIANILLIIGAGGAFNAIL), 343-363 (ILLAWLVALILHAAVGSATVA), 385-405 (IIAIAIGSGAIGCTIVTDSLF), and 425-445 (TATFIASVIALAGTFLLSFII).

The protein belongs to the GntP permease family.

It is found in the cell inner membrane. Its activity is regulated as follows. Uptake of D-serine is inhibited by carbonyl cyanide m-chlorophenylhydrazone (CCCP), and at high concentrations of D-threonine, stimulated by D-cycloserine and not affected by D-alanine or glycine. Protein that allows transport of D-serine across the inner membrane, does not transport D-alanine nor probably glycine. Is probably a H(+) symporter, as CCCP inhibits transport. Transports D-serine more efficiently than CycA. The polypeptide is D-serine transporter DsdX (dsdX) (Escherichia coli O6:H1 (strain CFT073 / ATCC 700928 / UPEC)).